The primary structure comprises 347 residues: Heat-inducible transcription repressor HrcA (347 aa).

This sequence belongs to the HrcA family.

Negative regulator of class I heat shock genes (grpE-dnaK-dnaJ and groELS operons). Prevents heat-shock induction of these operons. This chain is Heat-inducible transcription repressor HrcA, found in Enterococcus faecalis (strain ATCC 700802 / V583).